The chain runs to 376 residues: Glucose-1-phosphate adenylyltransferase (376 aa).

Residues tyrosine 101, glycine 166, 181–182 (EK), and serine 192 contribute to the alpha-D-glucose 1-phosphate site.

This sequence belongs to the bacterial/plant glucose-1-phosphate adenylyltransferase family. In terms of assembly, homotetramer.

The enzyme catalyses alpha-D-glucose 1-phosphate + ATP + H(+) = ADP-alpha-D-glucose + diphosphate. The protein operates within glycan biosynthesis; glycogen biosynthesis. Involved in the biosynthesis of ADP-glucose, a building block required for the elongation reactions to produce glycogen. Catalyzes the reaction between ATP and alpha-D-glucose 1-phosphate (G1P) to produce pyrophosphate and ADP-Glc. This chain is Glucose-1-phosphate adenylyltransferase, found in Bacillus cereus (strain ATCC 10987 / NRS 248).